The sequence spans 316 residues: Galectin-8 (316 aa).

Galectin domains are found at residues 18 to 151 and 186 to 316; these read YVST…IGFR and FEAR…VRSW. Positions 68, 78, and 88 each coordinate a carbohydrate. 248–254 contacts a beta-D-galactoside; that stretch reads WGEEERN.

Homodimer. Interacts with CALCOCO2/NDP52. Interacts with PDPN; the interaction is glycosylation-dependent; may participate in connection of the lymphatic endothelium to the surrounding extracellular matrix. Expressed in liver, kidney, cardiac muscle, lung, and brain.

The protein resides in the cytoplasmic vesicle. The protein localises to the cytoplasm. It is found in the cytosol. Functionally, beta-galactoside-binding lectin that acts as a sensor of membrane damage caused by infection and restricts the proliferation of infecting pathogens by targeting them for autophagy. Detects membrane rupture by binding beta-galactoside ligands located on the lumenal side of the endosome membrane; these ligands becoming exposed to the cytoplasm following rupture. Restricts infection by initiating autophagy via interaction with CALCOCO2/NDP52. Required to restrict infection of bacterial invasion such as S.typhimurium. Also required to restrict infection of Picornaviridae viruses. Has a marked preference for 3'-O-sialylated and 3'-O-sulfated glycans. In Rattus norvegicus (Rat), this protein is Galectin-8 (Lgals8).